Here is a 545-residue protein sequence, read N- to C-terminus: Probable protein kinase UbiB (545 aa).

One can recognise a Protein kinase domain in the interval 123 to 501; the sequence is DFDIVPLASA…RVRQHQSHYL (379 aa). Residues 129–137 and K152 each bind ATP; that span reads LASASIAQV. The active-site Proton acceptor is D287. 2 consecutive transmembrane segments (helical) span residues 498-518 and 521-541; these read SHYL…VVLS and EWDG…LVGW.

Belongs to the ABC1 family. UbiB subfamily.

The protein resides in the cell inner membrane. It participates in cofactor biosynthesis; ubiquinone biosynthesis [regulation]. Functionally, is probably a protein kinase regulator of UbiI activity which is involved in aerobic coenzyme Q (ubiquinone) biosynthesis. This chain is Probable protein kinase UbiB, found in Erwinia tasmaniensis (strain DSM 17950 / CFBP 7177 / CIP 109463 / NCPPB 4357 / Et1/99).